A 346-amino-acid polypeptide reads, in one-letter code: Holliday junction branch migration complex subunit RuvB (346 aa).

Residues 1-182 form a large ATPase domain (RuvB-L) region; it reads MSEPARLISP…FGIPVRLSFY (182 aa). ATP contacts are provided by residues Leu-21, Arg-22, Gly-63, Lys-66, Thr-67, Thr-68, 129–131, Arg-172, Tyr-182, and Arg-219; that span reads EDF. A Mg(2+)-binding site is contributed by Thr-67. The small ATPAse domain (RuvB-S) stretch occupies residues 183 to 253; sequence TVEELELIVR…IADEALTRLL (71 aa). Positions 256–346 are head domain (RuvB-H); sequence NVGFDQLDKR…AQFRLFQEDN (91 aa). Residues Arg-292, Arg-311, and Arg-316 each coordinate DNA.

It belongs to the RuvB family. Homohexamer. Forms an RuvA(8)-RuvB(12)-Holliday junction (HJ) complex. HJ DNA is sandwiched between 2 RuvA tetramers; dsDNA enters through RuvA and exits via RuvB. An RuvB hexamer assembles on each DNA strand where it exits the tetramer. Each RuvB hexamer is contacted by two RuvA subunits (via domain III) on 2 adjacent RuvB subunits; this complex drives branch migration. In the full resolvosome a probable DNA-RuvA(4)-RuvB(12)-RuvC(2) complex forms which resolves the HJ.

It localises to the cytoplasm. The catalysed reaction is ATP + H2O = ADP + phosphate + H(+). Its function is as follows. The RuvA-RuvB-RuvC complex processes Holliday junction (HJ) DNA during genetic recombination and DNA repair, while the RuvA-RuvB complex plays an important role in the rescue of blocked DNA replication forks via replication fork reversal (RFR). RuvA specifically binds to HJ cruciform DNA, conferring on it an open structure. The RuvB hexamer acts as an ATP-dependent pump, pulling dsDNA into and through the RuvAB complex. RuvB forms 2 homohexamers on either side of HJ DNA bound by 1 or 2 RuvA tetramers; 4 subunits per hexamer contact DNA at a time. Coordinated motions by a converter formed by DNA-disengaged RuvB subunits stimulates ATP hydrolysis and nucleotide exchange. Immobilization of the converter enables RuvB to convert the ATP-contained energy into a lever motion, pulling 2 nucleotides of DNA out of the RuvA tetramer per ATP hydrolyzed, thus driving DNA branch migration. The RuvB motors rotate together with the DNA substrate, which together with the progressing nucleotide cycle form the mechanistic basis for DNA recombination by continuous HJ branch migration. Branch migration allows RuvC to scan DNA until it finds its consensus sequence, where it cleaves and resolves cruciform DNA. In Rhizobium johnstonii (strain DSM 114642 / LMG 32736 / 3841) (Rhizobium leguminosarum bv. viciae), this protein is Holliday junction branch migration complex subunit RuvB.